The sequence spans 328 residues: Putative HTH-type transcriptional regulatory protein MA_3524 (328 aa).

The region spanning 132-190 is the HTH cro/C1-type domain; sequence LKKARTDQSMSLGTLASMVGVSRRTISKYEEEGMDASIDVVLQLEDIFGVELARPIDIL. Positions 143–162 form a DNA-binding region, H-T-H motif; the sequence is LGTLASMVGVSRRTISKYEE.

The protein is Putative HTH-type transcriptional regulatory protein MA_3524 of Methanosarcina acetivorans (strain ATCC 35395 / DSM 2834 / JCM 12185 / C2A).